The following is a 228-amino-acid chain: ATP-dependent dethiobiotin synthetase BioD (228 aa).

12-17 lines the ATP pocket; it reads DVGKTY. Residue Thr-16 participates in Mg(2+) binding. Residue Lys-37 is part of the active site. ATP-binding positions include Asp-53, 114-117, 174-175, 203-205, and Asn-210; these read EGMG, ND, and PFI. Mg(2+) contacts are provided by Asp-53 and Glu-114.

The protein belongs to the dethiobiotin synthetase family. Homodimer. Mg(2+) serves as cofactor.

The protein resides in the cytoplasm. The catalysed reaction is (7R,8S)-7,8-diammoniononanoate + CO2 + ATP = (4R,5S)-dethiobiotin + ADP + phosphate + 3 H(+). It functions in the pathway cofactor biosynthesis; biotin biosynthesis; biotin from 7,8-diaminononanoate: step 1/2. Its function is as follows. Catalyzes a mechanistically unusual reaction, the ATP-dependent insertion of CO2 between the N7 and N8 nitrogen atoms of 7,8-diaminopelargonic acid (DAPA, also called 7,8-diammoniononanoate) to form a ureido ring. The chain is ATP-dependent dethiobiotin synthetase BioD from Nitrosopumilus maritimus (strain SCM1).